A 544-amino-acid chain; its full sequence is Transcription factor bHLH119 (544 aa).

2 disordered regions span residues 12 to 59 (NGQV…QPPR) and 185 to 208 (VASTSATRPQSSASLAPTPPPPSV). Residues 15–29 (VVRTSQPQRPSSGKP) show a composition bias toward polar residues. Residues 50–59 (LPLPLLQPPR) are compositionally biased toward pro residues. Position 269 is a phosphothreonine (Thr-269). Ser-274 carries the phosphoserine modification. Disordered regions lie at residues 342 to 364 (QGTEEAHGSTSRKRSRAADMHNL) and 522 to 544 (QPPLPLQGQPTSQPSFSHASTSK). The 50-residue stretch at 357–406 (RAADMHNLSERRRRERINERMKTLQELLPRCRKTDKVSMLEDVIEYVKSL) folds into the bHLH domain. Positions 522 to 535 (QPPLPLQGQPTSQP) are enriched in low complexity. 2 positions are modified to phosphoserine: Ser-541 and Ser-543.

As to quaternary structure, homodimer.

The protein localises to the nucleus. The protein is Transcription factor bHLH119 (BHLH119) of Arabidopsis thaliana (Mouse-ear cress).